Consider the following 205-residue polypeptide: MTKIVRSKYKASRRLGVSLWGDSKDAFNTRNYRPGQHGQNTMIKTSDYGLHLKAKQRLKCYYGRVTEKQFRNTFALAQRMQGNTGENFIGLLESRLDTVVYRMNIAPTIFAARQLVSHGHIKLNGKKADIASIRLKEGDIIEIKESIQQIPLIQESIAKQGQTTPKYLSFDVSSLTGKYLRVPALSDVPYPFEAEVHLVIELYSR.

In terms of domain architecture, S4 RNA-binding spans 94 to 157 (SRLDTVVYRM…QQIPLIQESI (64 aa)).

Belongs to the universal ribosomal protein uS4 family. In terms of assembly, part of the 30S ribosomal subunit. Contacts protein S5. The interaction surface between S4 and S5 is involved in control of translational fidelity.

Its function is as follows. One of the primary rRNA binding proteins, it binds directly to 16S rRNA where it nucleates assembly of the body of the 30S subunit. With S5 and S12 plays an important role in translational accuracy. The sequence is that of Small ribosomal subunit protein uS4 from Rickettsia typhi (strain ATCC VR-144 / Wilmington).